We begin with the raw amino-acid sequence, 60 residues long: Homeobox protein engrailed-like A (60 aa).

The homeobox DNA-binding region spans 1–41; it reads ADQLARLRAEFQANRYLTEERRQNLARELSLNEAQIKIWFQ.

This sequence belongs to the engrailed homeobox family.

It localises to the nucleus. The sequence is that of Homeobox protein engrailed-like A from Myxine glutinosa (Atlantic hagfish).